The sequence spans 164 residues: R-phycoerythrin alpha chain (164 aa).

Positions 47, 81, 82, 84, 88, 137, 139, and 142 each coordinate (2R,3E)-phycoerythrobilin.

It belongs to the phycobiliprotein family. As to quaternary structure, heterododecamer of 6 alpha and 6 beta chains. The basic functional unit of phycobiliproteins is a ring-shaped hexamer formed from two back-to-back trimers contacting via the alpha chain subunits. The trimers are composed of alpha/beta subunit heterodimers arranged around a three-fold axis of symmetry. The phycoerythrins also contain a gamma subunit which is located in the center of the hexamer. In terms of processing, contains two covalently linked phycoerythrobilin chromophores.

It is found in the plastid. The protein resides in the chloroplast thylakoid membrane. Functionally, light-harvesting photosynthetic tetrapyrrole chromophore-protein from the phycobiliprotein complex. This is R-phycoerythrin alpha chain (cpeA) from Griffithsia monilis (Red alga).